The chain runs to 500 residues: UDP-GalNAc:beta-1,3-N-acetylgalactosaminyltransferase 2 (500 aa).

Residues 1–6 are Cytoplasmic-facing; that stretch reads MRNWLV. A helical; Signal-anchor for type II membrane protein transmembrane segment spans residues 7–23; sequence LLCPCVLGAALHLWLRL. At 24 to 500 the chain is on the lumenal side; the sequence is RSPPPACASG…CGDPCRCQAR (477 aa). 2 N-linked (GlcNAc...) asparagine glycosylation sites follow: N116 and N174.

This sequence belongs to the glycosyltransferase 31 family. N-glycosylated. Expressed in all tissues examined, but at highest levels in testis, adipose tissue, skeletal muscle and ovary.

It localises to the golgi apparatus membrane. The protein localises to the endoplasmic reticulum. It catalyses the reaction 3-O-(N-acetyl-beta-D-glucosaminyl-(1-&gt;4)-alpha-D-mannosyl)-L-threonyl-[protein] + UDP-N-acetyl-alpha-D-galactosamine = 3-O-[beta-D-GalNAc-(1-&gt;3)-beta-D-GlcNAc-(1-&gt;4)-alpha-D-Man]-L-Thr-[protein] + UDP + H(+). It participates in protein modification; protein glycosylation. In terms of biological role, beta-1,3-N-acetylgalactosaminyltransferase that synthesizes a unique carbohydrate structure, GalNAc-beta-1-3GlcNAc, on N- and O-glycans. Has no galactose nor galactosaminyl transferase activity toward any acceptor substrate. Involved in alpha-dystroglycan (DAG1) glycosylation: acts coordinately with GTDC2/POMGnT2 to synthesize a GalNAc-beta3-GlcNAc-beta-terminus at the 4-position of protein O-mannose in the biosynthesis of the phosphorylated O-mannosyl trisaccharide (N-acetylgalactosamine-beta-3-N-acetylglucosamine-beta-4-(phosphate-6-)mannose), a carbohydrate structure present in alpha-dystroglycan, which is required for binding laminin G-like domain-containing extracellular proteins with high affinity. In Homo sapiens (Human), this protein is UDP-GalNAc:beta-1,3-N-acetylgalactosaminyltransferase 2 (B3GALNT2).